Reading from the N-terminus, the 117-residue chain is Protein OPG035 (117 aa).

It belongs to the poxviridae OPG035 family.

Functionally, bcl-2-like protein which contributes to virulence by preventing host NF-kappa-B activation in response to pro-inflammatory stimuli such as TNF-alpha or IL1B. The sequence is that of Protein OPG035 (OPG035) from Bos taurus (Bovine).